The following is a 363-amino-acid chain: MPVLLDPENALALDVLLAGTDAQGLDWHLSAPDAADLPRIRGIGTLSSAGSEEISFLSNPRYQNQLATTRAAAVIVTPDVAQARQEQGASGHVLVVCKHPYLLYARLAQWFERASRPAGPAGVHPSAVVDPSAEIDADARVGAQCVIEAGARIGRGARLGPGCVIGAGSTVGADSLLHPRVTLYAGVHVGERAIIHSGAVLGADGFGFAPDPTLGRGAWGKIPQLGGVRVGNDVEIGANTTIDRGALDDTIVGDGVKLDNQIMVAHNVRIGAHTAIAACVGIAGSTTIGERCTIGGASMLSGHLAIADDVNISGGTAVTSNIAKAGRYTGVYPYAEHSEWQRNAAVIQQLALLRRRLRALERE.

Catalysis depends on H266, which acts as the Proton acceptor.

The protein belongs to the transferase hexapeptide repeat family. LpxD subfamily. As to quaternary structure, homotrimer.

The enzyme catalyses a UDP-3-O-[(3R)-3-hydroxyacyl]-alpha-D-glucosamine + a (3R)-hydroxyacyl-[ACP] = a UDP-2-N,3-O-bis[(3R)-3-hydroxyacyl]-alpha-D-glucosamine + holo-[ACP] + H(+). It functions in the pathway bacterial outer membrane biogenesis; LPS lipid A biosynthesis. Catalyzes the N-acylation of UDP-3-O-acylglucosamine using 3-hydroxyacyl-ACP as the acyl donor. Is involved in the biosynthesis of lipid A, a phosphorylated glycolipid that anchors the lipopolysaccharide to the outer membrane of the cell. The chain is UDP-3-O-acylglucosamine N-acyltransferase from Bordetella bronchiseptica (strain ATCC BAA-588 / NCTC 13252 / RB50) (Alcaligenes bronchisepticus).